The sequence spans 195 residues: PABIR family member 1 (195 aa).

This sequence belongs to the FAM122 family.

In Homo sapiens (Human), this protein is PABIR family member 1.